A 128-amino-acid chain; its full sequence is Glycine cleavage system H protein (128 aa).

The 83-residue stretch at 24–106 folds into the Lipoyl-binding domain; the sequence is SVTVGITAHA…YGDGWFFKIK (83 aa). Residue K65 is modified to N6-lipoyllysine.

It belongs to the GcvH family. As to quaternary structure, the glycine cleavage system is composed of four proteins: P, T, L and H. It depends on (R)-lipoate as a cofactor.

Its function is as follows. The glycine cleavage system catalyzes the degradation of glycine. The H protein shuttles the methylamine group of glycine from the P protein to the T protein. This Chromobacterium violaceum (strain ATCC 12472 / DSM 30191 / JCM 1249 / CCUG 213 / NBRC 12614 / NCIMB 9131 / NCTC 9757 / MK) protein is Glycine cleavage system H protein.